Consider the following 670-residue polypeptide: Acetyl-coenzyme A synthetase (670 aa).

CoA-binding positions include 205–208 (RRGK) and Thr-326. ATP-binding positions include 402–404 (GEP), 426–431 (STWWMT), Asp-517, Arg-532, and Arg-543. Mg(2+)-binding residues include Val-554, His-556, and Val-559. Arg-601 contacts CoA. Lys-626 carries the N6-acetyllysine modification.

The protein belongs to the ATP-dependent AMP-binding enzyme family. Mg(2+) serves as cofactor. In terms of processing, acetylated. Deacetylation by the SIR2-homolog deacetylase activates the enzyme.

It carries out the reaction acetate + ATP + CoA = acetyl-CoA + AMP + diphosphate. In terms of biological role, catalyzes the conversion of acetate into acetyl-CoA (AcCoA), an essential intermediate at the junction of anabolic and catabolic pathways. AcsA undergoes a two-step reaction. In the first half reaction, AcsA combines acetate with ATP to form acetyl-adenylate (AcAMP) intermediate. In the second half reaction, it can then transfer the acetyl group from AcAMP to the sulfhydryl group of CoA, forming the product AcCoA. The polypeptide is Acetyl-coenzyme A synthetase (Pyrobaculum arsenaticum (strain DSM 13514 / JCM 11321 / PZ6)).